A 212-amino-acid polypeptide reads, in one-letter code: Thymidylate kinase (212 aa).

13-20 (GLEGAGKS) contacts ATP.

The protein belongs to the thymidylate kinase family.

It carries out the reaction dTMP + ATP = dTDP + ADP. In terms of biological role, phosphorylation of dTMP to form dTDP in both de novo and salvage pathways of dTTP synthesis. This chain is Thymidylate kinase, found in Legionella pneumophila (strain Corby).